The primary structure comprises 502 residues: Glutamate--tRNA ligase (502 aa).

Positions 9-19 (PSPTGFPHVGT) match the 'HIGH' region motif. Residues 250–254 (KLSKR) carry the 'KMSKS' region motif. ATP is bound at residue Lys-253.

The protein belongs to the class-I aminoacyl-tRNA synthetase family. Glutamate--tRNA ligase type 1 subfamily. In terms of assembly, monomer.

It localises to the cytoplasm. It carries out the reaction tRNA(Glu) + L-glutamate + ATP = L-glutamyl-tRNA(Glu) + AMP + diphosphate. In terms of biological role, catalyzes the attachment of glutamate to tRNA(Glu) in a two-step reaction: glutamate is first activated by ATP to form Glu-AMP and then transferred to the acceptor end of tRNA(Glu). This Acinetobacter baylyi (strain ATCC 33305 / BD413 / ADP1) protein is Glutamate--tRNA ligase.